A 214-amino-acid chain; its full sequence is Immunoglobulin lambda-like polypeptide 5 (214 aa).

Residues M1–A35 form the signal peptide. The segment at V98–G109 is j region. The interval Q110–S214 is c region. Residues P115–A209 form the Ig-like C1-type domain. C136 and C195 are disulfide-bonded.

Contrary to IGLL1, not expressed in pre-B-cells.

The protein localises to the secreted. The polypeptide is Immunoglobulin lambda-like polypeptide 5 (IGLL5) (Homo sapiens (Human)).